The following is an 84-amino-acid chain: Beta-cardiotoxin CTX15 (84 aa).

The signal sequence occupies residues 1-21; sequence MKTLLLTLVVVTIVCLDLGYT. 4 disulfides stabilise this stretch: C24–C43, C36–C61, C65–C76, and C77–C82.

It belongs to the three-finger toxin family. Short-chain subfamily. Aminergic toxin sub-subfamily. In terms of tissue distribution, expressed by the venom gland.

It localises to the secreted. In terms of biological role, acts as a beta-blocker by binding to beta-1 and beta-2 adrenergic receptors (ADRB1 and ADRB2). It dose-dependently decreases the heart rate (bradycardia), whereas conventional cardiotoxins increases it. At 100 mg/kg, intraperitoneal injection into mice provokes labored breathing, impaired locomotion, lack of response to external stimuli, and death (after 30 minutes). The polypeptide is Beta-cardiotoxin CTX15 (Ophiophagus hannah (King cobra)).